Reading from the N-terminus, the 196-residue chain is Holliday junction branch migration complex subunit RuvA (196 aa).

The interval 1–63 is domain I; that stretch reads MYDYIKGKLS…DDAHLLFGFH (63 aa). Residues 64–142 form a domain II region; sequence TENEKEIFLN…EASGESATSR (79 aa). The tract at residues 143 to 148 is flexible linker; it reads KVSSEQ. Residues 148-196 are domain III; it reads QNSNLEEAMEALLALGYKATELKKVKAFFEGTNETVEQYIKSSLKMLMK.

The protein belongs to the RuvA family. As to quaternary structure, homotetramer. Forms an RuvA(8)-RuvB(12)-Holliday junction (HJ) complex. HJ DNA is sandwiched between 2 RuvA tetramers; dsDNA enters through RuvA and exits via RuvB. An RuvB hexamer assembles on each DNA strand where it exits the tetramer. Each RuvB hexamer is contacted by two RuvA subunits (via domain III) on 2 adjacent RuvB subunits; this complex drives branch migration. In the full resolvosome a probable DNA-RuvA(4)-RuvB(12)-RuvC(2) complex forms which resolves the HJ.

Its subcellular location is the cytoplasm. Functionally, the RuvA-RuvB-RuvC complex processes Holliday junction (HJ) DNA during genetic recombination and DNA repair, while the RuvA-RuvB complex plays an important role in the rescue of blocked DNA replication forks via replication fork reversal (RFR). RuvA specifically binds to HJ cruciform DNA, conferring on it an open structure. The RuvB hexamer acts as an ATP-dependent pump, pulling dsDNA into and through the RuvAB complex. HJ branch migration allows RuvC to scan DNA until it finds its consensus sequence, where it cleaves and resolves the cruciform DNA. This chain is Holliday junction branch migration complex subunit RuvA, found in Streptococcus agalactiae serotype III (strain NEM316).